The chain runs to 206 residues: Two-component response regulator ARR15 (206 aa).

Residues 19–146 (HVLAVDDSFV…DVKRLKELIM (128 aa)) enclose the Response regulatory domain. The residue at position 79 (D79) is a 4-aspartylphosphate. The segment at 151–206 (AEEGKTKKLSPKRILQNDIDSSPSSSSTSSSSSSHDVSSLDDDTPSSKRIKLESRG) is disordered. Residues 168–187 (DIDSSPSSSSTSSSSSSHDV) are compositionally biased toward low complexity.

Belongs to the ARR family. Type-A subfamily. Post-translationally, two-component system major event consists of a His-to-Asp phosphorelay between a sensor histidine kinase (HK) and a response regulator (RR). In plants, the His-to-Asp phosphorelay involves an additional intermediate named Histidine-containing phosphotransfer protein (HPt). This multistep phosphorelay consists of a His-Asp-His-Asp sequential transfer of a phosphate group between first a His and an Asp of the HK protein, followed by the transfer to a conserved His of the HPt protein and finally the transfer to an Asp in the receiver domain of the RR protein.

The protein localises to the nucleus. Functions as a response regulator involved in His-to-Asp phosphorelay signal transduction system. Phosphorylation of the Asp residue in the receiver domain activates the ability of the protein to promote the transcription of target genes. Type-A response regulators seem to act as negative regulators of the cytokinin signaling. This Arabidopsis thaliana (Mouse-ear cress) protein is Two-component response regulator ARR15 (ARR15).